The primary structure comprises 142 residues: Putative pre-16S rRNA nuclease (142 aa).

The protein belongs to the YqgF nuclease family.

It localises to the cytoplasm. Its function is as follows. Could be a nuclease involved in processing of the 5'-end of pre-16S rRNA. This Azotobacter vinelandii (strain DJ / ATCC BAA-1303) protein is Putative pre-16S rRNA nuclease.